The sequence spans 625 residues: BTB/POZ domain-containing protein At5g48130 (625 aa).

One can recognise a BTB domain in the interval Ala41–Pro105. The region spanning Asp217–Asn469 is the NPH3 domain. A compositionally biased stretch (polar residues) spans Val494–Cys507. The tract at residues Val494–Gly513 is disordered.

The protein belongs to the NPH3 family.

It functions in the pathway protein modification; protein ubiquitination. Functionally, may act as a substrate-specific adapter of an E3 ubiquitin-protein ligase complex (CUL3-RBX1-BTB) which mediates the ubiquitination and subsequent proteasomal degradation of target proteins. The chain is BTB/POZ domain-containing protein At5g48130 from Arabidopsis thaliana (Mouse-ear cress).